The following is a 256-amino-acid chain: Acetyl-coenzyme A carboxylase carboxyl transferase subunit alpha (256 aa).

Residues 1–236 enclose the CoA carboxyltransferase C-terminal domain; that stretch reads MTDVSRVLKE…KANLIEQITS (236 aa).

The protein belongs to the AccA family. In terms of assembly, acetyl-CoA carboxylase is a heterohexamer composed of biotin carboxyl carrier protein (AccB), biotin carboxylase (AccC) and two subunits each of ACCase subunit alpha (AccA) and ACCase subunit beta (AccD).

Its subcellular location is the cytoplasm. It carries out the reaction N(6)-carboxybiotinyl-L-lysyl-[protein] + acetyl-CoA = N(6)-biotinyl-L-lysyl-[protein] + malonyl-CoA. The protein operates within lipid metabolism; malonyl-CoA biosynthesis; malonyl-CoA from acetyl-CoA: step 1/1. Its function is as follows. Component of the acetyl coenzyme A carboxylase (ACC) complex. First, biotin carboxylase catalyzes the carboxylation of biotin on its carrier protein (BCCP) and then the CO(2) group is transferred by the carboxyltransferase to acetyl-CoA to form malonyl-CoA. This Streptococcus pyogenes serotype M12 (strain MGAS2096) protein is Acetyl-coenzyme A carboxylase carboxyl transferase subunit alpha.